We begin with the raw amino-acid sequence, 576 residues long: Low-affinity glucose transporter HXT4 (576 aa).

Residues 1–56 (MSEEAAYQEDTAVQNTPADALSPVESDSNSALSTPSNKAERDDMKDFDENHEESNN) form a disordered region. Residues 1–66 (MSEEAAYQED…YVEIPKKPAS (66 aa)) are Cytoplasmic-facing. Over residues 25-37 (ESDSNSALSTPSN) the composition is skewed to polar residues. Residues 38–54 (KAERDDMKDFDENHEES) show a composition bias toward basic and acidic residues. Residue K45 forms a Glycyl lysine isopeptide (Lys-Gly) (interchain with G-Cter in ubiquitin) linkage. A helical transmembrane segment spans residues 67–87 (AYVTVSICCLMVAFGGFVFGW). Over 88-122 (DTGTISGFVAQTDFIRRFGMKHHDGTYYLSKVRTG) the chain is Extracellular. Residues 123 to 143 (LIVSIFNIGCAIGGIILAKLG) traverse the membrane as a helical segment. Residues 144–149 (DMYGRK) lie on the Cytoplasmic side of the membrane. The helical transmembrane segment at 150 to 170 (MGLIVVVVIYIIGIIIQIASI) threads the bilayer. Residues 171–180 (NKWYQYFIGR) are Extracellular-facing. A helical transmembrane segment spans residues 181–201 (IISGLGVGGIAVLSPMLISEV). Over 202–207 (SPKHIR) the chain is Cytoplasmic. The chain crosses the membrane as a helical span at residues 208–228 (GTLVSCYQLMITLGIFLGYCT). The Extracellular segment spans residues 229–242 (NYGTKTYTNSVQWR). Residues 243-263 (VPLGLGFAWALFMIGGMTFVP) form a helical membrane-spanning segment. Residues 264 to 346 (ESPRYLVEVG…IQSLQQLTGD (83 aa)) lie on the Cytoplasmic side of the membrane. Residues 347–363 (NYFFYYGTTVFTAVGLE) traverse the membrane as a helical segment. At 364-369 (DSFETS) the chain is on the extracellular side. Residues 370 to 387 (IVLGIVNFASTFVGIFLV) form a helical membrane-spanning segment. The Cytoplasmic segment spans residues 388–394 (ERYGRRR). A helical membrane pass occupies residues 395-415 (CLLWGAASMTACMVVFASVGV). The Extracellular segment spans residues 416–437 (TRLWPNGKKNGSSKGAGNCMIV). The N-linked (GlcNAc...) asparagine glycan is linked to N425. A helical membrane pass occupies residues 438–458 (FTCFYLFCFATTWAPIPFVVN). Residues 459–475 (SETFPLRVKSKCMAIAQ) are Cytoplasmic-facing. The chain crosses the membrane as a helical span at residues 476–496 (ACNWIWGFLIGFFTPFISGAI). Residue D497 is a topological domain, extracellular. Residues 498–518 (FYYGYVFMGCLVFSYFYVFFF) form a helical membrane-spanning segment. Residues 519-576 (VPETKGLTLEEVNTLWEEGVLPWKSPSWVPPNKRGTDYNADDLMHDDQPFYKKMFGKK) lie on the Cytoplasmic side of the membrane.

Belongs to the major facilitator superfamily. Sugar transporter (TC 2.A.1.1) family.

The protein localises to the cell membrane. With respect to regulation, xylose uptake is strongly inhibited by glucose. Low-affinity glucose transporter. Can also transport xylose. This is Low-affinity glucose transporter HXT4 (HXT4) from Saccharomyces cerevisiae (strain ATCC 204508 / S288c) (Baker's yeast).